An 80-amino-acid polypeptide reads, in one-letter code: UPF0154 protein MGAS10270_Spy0296 (80 aa).

The chain crosses the membrane as a helical span at residues 4 to 24 (AIWILLLIVALGVGVFGGIFI).

The protein belongs to the UPF0154 family.

Its subcellular location is the cell membrane. This chain is UPF0154 protein MGAS10270_Spy0296, found in Streptococcus pyogenes serotype M2 (strain MGAS10270).